A 433-amino-acid chain; its full sequence is Nuclear hormone receptor family member nhr-98 (433 aa).

Positions 41-116 (SKKCQICENP…FGMTIDNFQF (76 aa)) form a DNA-binding region, nuclear receptor. NR C4-type zinc fingers lie at residues 44–64 (CQIC…CRAC) and 80–104 (CKTE…MQRC). The 257-residue stretch at 177–433 (ETPYQVSNVL…CSHPGIFLNA (257 aa)) folds into the NR LBD domain.

This sequence belongs to the nuclear hormone receptor family.

It is found in the nucleus. Functionally, orphan nuclear receptor. This chain is Nuclear hormone receptor family member nhr-98 (nhr-98), found in Caenorhabditis elegans.